Here is a 214-residue protein sequence, read N- to C-terminus: Orotate phosphoribosyltransferase (214 aa).

Position 26 (K26) interacts with 5-phospho-alpha-D-ribose 1-diphosphate. An orotate-binding site is contributed by 34–35 (FF). Residues 72 to 73 (YK), R99, K100, K103, H105, and 124 to 132 (DDVITAGTA) contribute to the 5-phospho-alpha-D-ribose 1-diphosphate site. Orotate is bound by residues T128 and R156.

It belongs to the purine/pyrimidine phosphoribosyltransferase family. PyrE subfamily. In terms of assembly, homodimer. The cofactor is Mg(2+).

It carries out the reaction orotidine 5'-phosphate + diphosphate = orotate + 5-phospho-alpha-D-ribose 1-diphosphate. Its pathway is pyrimidine metabolism; UMP biosynthesis via de novo pathway; UMP from orotate: step 1/2. Catalyzes the transfer of a ribosyl phosphate group from 5-phosphoribose 1-diphosphate to orotate, leading to the formation of orotidine monophosphate (OMP). This Proteus mirabilis (strain HI4320) protein is Orotate phosphoribosyltransferase.